The sequence spans 258 residues: Type III pantothenate kinase (258 aa).

Residue 6 to 13 (DVGNTNIV) participates in ATP binding. Substrate-binding positions include tyrosine 100 and 107 to 110 (GADR). Residue aspartate 109 is the Proton acceptor of the active site. Aspartate 129 provides a ligand contact to K(+). Position 132 (threonine 132) interacts with ATP. Threonine 184 contacts substrate.

It belongs to the type III pantothenate kinase family. As to quaternary structure, homodimer. The cofactor is NH4(+). K(+) is required as a cofactor.

The protein resides in the cytoplasm. It carries out the reaction (R)-pantothenate + ATP = (R)-4'-phosphopantothenate + ADP + H(+). It functions in the pathway cofactor biosynthesis; coenzyme A biosynthesis; CoA from (R)-pantothenate: step 1/5. Catalyzes the phosphorylation of pantothenate (Pan), the first step in CoA biosynthesis. The chain is Type III pantothenate kinase from Desulfitobacterium hafniense (strain DSM 10664 / DCB-2).